The following is an 84-amino-acid chain: Small ribosomal subunit protein bS16 (84 aa).

It belongs to the bacterial ribosomal protein bS16 family.

This chain is Small ribosomal subunit protein bS16, found in Burkholderia mallei (strain NCTC 10247).